The primary structure comprises 560 residues: Calnexin homolog (560 aa).

The signal sequence occupies residues 1-22 (MKYGKVSFLALLCSLYVRGSLA). Topologically, residues 23-489 (DPESEQEPLV…ETIIETPEIG (467 aa)) are lumenal. A disulfide bridge connects residues Cys-132 and Cys-163. Residues Tyr-136, Lys-138, Tyr-154, and Asp-161 each coordinate an alpha-D-glucoside. Positions 242-375 (IYDPEDIKPA…RKIPNPDYFD (134 aa)) are p domain (Extended arm). 5 tandem repeats follow at residues 244-255 (DPEDIKPADWVD), 261-272 (DPNAVKPDDWDE), 280-291 (DPDAVKPEDWLE), 299-310 (DPEAQKPEDWDD), and 314-324 (GDWIPSEIINP). 2 4 X approximate repeats regions span residues 244–310 (DPED…DWDD) and 314–371 (GDWI…IPNP). Positions 253 to 273 (WVDEPEIPDPNAVKPDDWDED) are disordered. Residues Cys-326 and Cys-332 are joined by a disulfide bond. Tandem repeats lie at residues 333-343 (GEWKPPMIRNP), 347-357 (GPWSPPMIPNP), and 361-371 (GEWYPRKIPNP). An an alpha-D-glucoside-binding site is contributed by Glu-391. Asn-418 is a glycosylation site (N-linked (GlcNAc...) asparagine). Residues 490-512 (IAIVAVLGSLTAVILTCYFYFFA) form a helical membrane-spanning segment. Topologically, residues 513–560 (SSSPASLSTGTTEAEKEQQEKFKQETETEKIDVSYAPETESPTAKNED) are cytoplasmic. The interval 517 to 560 (ASLSTGTTEAEKEQQEKFKQETETEKIDVSYAPETESPTAKNED) is disordered. Positions 525-544 (EAEKEQQEKFKQETETEKID) are enriched in basic and acidic residues. Residue Thr-551 is modified to Phosphothreonine. Ser-553 is subject to Phosphoserine. Thr-555 is subject to Phosphothreonine.

This sequence belongs to the calreticulin family.

It is found in the endoplasmic reticulum membrane. Its function is as follows. Calcium-binding protein that interacts with newly synthesized monoglucosylated glycoproteins in the endoplasmic reticulum. It may act in assisting protein assembly and/or in the retention within the ER of unassembled protein subunits. It seems to play a major role in the quality control apparatus of the ER by the retention of incorrectly folded proteins. This Schizosaccharomyces pombe (strain 972 / ATCC 24843) (Fission yeast) protein is Calnexin homolog (cal1).